The chain runs to 509 residues: tRNA-2-methylthio-N(6)-dimethylallyladenosine synthase (509 aa).

The segment at 1 to 21 (MNEKQKLESGQVHPSDKKSEK) is disordered. One can recognise an MTTase N-terminal domain in the interval 66–184 (RKFYIRTYGC…LPELLSEAYL (119 aa)). Positions 75, 111, 145, 221, 225, and 228 each coordinate [4Fe-4S] cluster. A Radical SAM core domain is found at 207-437 (RNGKIKGWVN…NALVNEISAK (231 aa)). In terms of domain architecture, TRAM spans 440-503 (KEYEGKVVEV…TWSLDGEMVG (64 aa)).

It belongs to the methylthiotransferase family. MiaB subfamily. In terms of assembly, monomer. [4Fe-4S] cluster is required as a cofactor.

It is found in the cytoplasm. The enzyme catalyses N(6)-dimethylallyladenosine(37) in tRNA + (sulfur carrier)-SH + AH2 + 2 S-adenosyl-L-methionine = 2-methylsulfanyl-N(6)-dimethylallyladenosine(37) in tRNA + (sulfur carrier)-H + 5'-deoxyadenosine + L-methionine + A + S-adenosyl-L-homocysteine + 2 H(+). The catalysed reaction is N(6)-dimethylallyladenosine(37) in tRNA + (sulfur carrier)-SH + AH2 + S-adenosyl-L-methionine = 2-thio-N(6)-dimethylallyladenosine(37) in tRNA + (sulfur carrier)-H + 5'-deoxyadenosine + L-methionine + A + H(+). It catalyses the reaction 2-thio-N(6)-dimethylallyladenosine(37) in tRNA + S-adenosyl-L-methionine = 2-methylsulfanyl-N(6)-dimethylallyladenosine(37) in tRNA + S-adenosyl-L-homocysteine + H(+). Catalyzes the methylthiolation of N6-(dimethylallyl)adenosine (i(6)A), leading to the formation of 2-methylthio-N6-(dimethylallyl)adenosine (ms(2)i(6)A) at position 37 in tRNAs that read codons beginning with uridine. The polypeptide is tRNA-2-methylthio-N(6)-dimethylallyladenosine synthase (Bacillus subtilis (strain 168)).